A 330-amino-acid polypeptide reads, in one-letter code: Carbonic anhydrase (330 aa).

The segment at methionine 1–alanine 109 is chloroplast transit peptide-like.

It belongs to the beta-class carbonic anhydrase family.

It localises to the cytoplasm. The catalysed reaction is hydrogencarbonate + H(+) = CO2 + H2O. Reversible hydration of carbon dioxide. In Flaveria bidentis (Coastal plain yellowtops), this protein is Carbonic anhydrase.